The following is a 592-amino-acid chain: A-type ATP synthase subunit A (592 aa).

Position 233–240 (233–240 (GPFGSGKT)) interacts with ATP.

This sequence belongs to the ATPase alpha/beta chains family. As to quaternary structure, has multiple subunits with at least A(3), B(3), C, D, E, F, H, I and proteolipid K(x).

The protein resides in the cell membrane. It catalyses the reaction ATP + H2O + 4 H(+)(in) = ADP + phosphate + 5 H(+)(out). In terms of biological role, component of the A-type ATP synthase that produces ATP from ADP in the presence of a proton gradient across the membrane. The A chain is the catalytic subunit. The sequence is that of A-type ATP synthase subunit A from Saccharolobus islandicus (strain Y.G.57.14 / Yellowstone #1) (Sulfolobus islandicus).